A 317-amino-acid chain; its full sequence is Melanocyte-stimulating hormone receptor (317 aa).

Over 1–37 the chain is Extracellular; the sequence is MPMQGAQRRLLGSLNSTPTATPNLGLAANHTGAPCLE. Residue Asn29 is glycosylated (N-linked (GlcNAc...) asparagine). Residues 38–63 form a helical membrane-spanning segment; the sequence is VSIPHGLFLSLGLVSLVENVLVVAAI. The Cytoplasmic portion of the chain corresponds to 64 to 72; it reads AKNRNLHSP. The chain crosses the membrane as a helical span at residues 73–93; the sequence is MYCFICCLALSDLLVSGSNML. Residues 94–118 are Extracellular-facing; it reads ETAVILLLEAGALATRASVVQQLQN. A helical membrane pass occupies residues 119 to 140; that stretch reads TIDVLTCSSMLCSLCFLGAIAV. Residues 141-163 are Cytoplasmic-facing; it reads DRYVSIFYALRYHSIVTLPRARR. Residues 164-183 form a helical membrane-spanning segment; the sequence is AIAAIWVASVLSSTLFIAYC. Residues 184–191 lie on the Extracellular side of the membrane; that stretch reads DHAAVLLC. Residues 192–211 form a helical membrane-spanning segment; the sequence is LVVFFLAMLVLMAVLYVHML. The Cytoplasmic portion of the chain corresponds to 212–240; the sequence is ARACQHAQGITRLHKRQLPAHQGFGLRGA. A helical transmembrane segment spans residues 241 to 266; the sequence is ATLTILLGIFFLCWGPFFLHLMLVVL. Residues 267–279 lie on the Extracellular side of the membrane; that stretch reads CPQHLTCSCIFKN. The helical transmembrane segment at 280–300 threads the bilayer; that stretch reads FKVFLTLIICNTIIDPLIYAF. Topologically, residues 301-317 are cytoplasmic; it reads RSQELCRTLKEVLLCSW. Cys315 is lipidated: S-palmitoyl cysteine.

This sequence belongs to the G-protein coupled receptor 1 family. As to quaternary structure, interacts with MGRN1, but does not undergo MGRN1-mediated ubiquitination; this interaction competes with GNAS-binding and thus inhibits agonist-induced cAMP production. Interacts with OPN3; the interaction results in a decrease in MC1R-mediated cAMP signaling and ultimately a decrease in melanin production in melanocytes.

The protein localises to the cell membrane. Its function is as follows. Receptor for MSH (alpha, beta and gamma) and ACTH. The activity of this receptor is mediated by G proteins which activate adenylate cyclase. Mediates melanogenesis, the production of eumelanin (black/brown) and phaeomelanin (red/yellow), via regulation of cAMP signaling in melanocytes. The protein is Melanocyte-stimulating hormone receptor (MC1R) of Alouatta caraya (Black howler monkey).